Reading from the N-terminus, the 726-residue chain is Putative tyrosine-protein kinase AmsA (726 aa).

2 consecutive transmembrane segments (helical) span residues 32–52 (WMIVAVSVLFTLMGTLYSLFA) and 425–445 (ILIVAGSLILGLVVSVGLVLM).

It belongs to the etk/wzc family.

It is found in the cell inner membrane. It catalyses the reaction L-tyrosyl-[protein] + ATP = O-phospho-L-tyrosyl-[protein] + ADP + H(+). It functions in the pathway glycan metabolism; exopolysaccharide biosynthesis. Its function is as follows. Involved in the biosynthesis of amylovoran which functions as a virulence factor. This Erwinia amylovora (Fire blight bacteria) protein is Putative tyrosine-protein kinase AmsA (amsA).